Consider the following 236-residue polypeptide: Leucyl/phenylalanyl-tRNA--protein transferase (236 aa).

Belongs to the L/F-transferase family.

Its subcellular location is the cytoplasm. It catalyses the reaction N-terminal L-lysyl-[protein] + L-leucyl-tRNA(Leu) = N-terminal L-leucyl-L-lysyl-[protein] + tRNA(Leu) + H(+). The enzyme catalyses N-terminal L-arginyl-[protein] + L-leucyl-tRNA(Leu) = N-terminal L-leucyl-L-arginyl-[protein] + tRNA(Leu) + H(+). It carries out the reaction L-phenylalanyl-tRNA(Phe) + an N-terminal L-alpha-aminoacyl-[protein] = an N-terminal L-phenylalanyl-L-alpha-aminoacyl-[protein] + tRNA(Phe). Its function is as follows. Functions in the N-end rule pathway of protein degradation where it conjugates Leu, Phe and, less efficiently, Met from aminoacyl-tRNAs to the N-termini of proteins containing an N-terminal arginine or lysine. This chain is Leucyl/phenylalanyl-tRNA--protein transferase, found in Nitrosomonas europaea (strain ATCC 19718 / CIP 103999 / KCTC 2705 / NBRC 14298).